The following is an 871-amino-acid chain: DNA mismatch repair protein MutS (871 aa).

An ATP-binding site is contributed by 630–637 (GPNMGGKS). Residues 830 to 849 (KEEPESKSASPVEAALAGIN) form a disordered region.

It belongs to the DNA mismatch repair MutS family.

Its function is as follows. This protein is involved in the repair of mismatches in DNA. It is possible that it carries out the mismatch recognition step. This protein has a weak ATPase activity. The sequence is that of DNA mismatch repair protein MutS from Verminephrobacter eiseniae (strain EF01-2).